We begin with the raw amino-acid sequence, 159 residues long: MNITIISVGKLKEKYLKLAVEEYSKRLSRYCKLNIIEVTDEKTPDNASEKEELQIKEKEGDLILKNIKDNMFVIALDLNGNELTSIDFSNFINDLGIKGESNLTFVIGGSLGLSSKVLSRSNYKLCFSKMTFPHQLFRVMLLEQIYRGYRIMNGEPYHK.

S-adenosyl-L-methionine is bound by residues L76, G108, and F127–F132.

The protein belongs to the RNA methyltransferase RlmH family. Homodimer.

The protein localises to the cytoplasm. It carries out the reaction pseudouridine(1915) in 23S rRNA + S-adenosyl-L-methionine = N(3)-methylpseudouridine(1915) in 23S rRNA + S-adenosyl-L-homocysteine + H(+). Its function is as follows. Specifically methylates the pseudouridine at position 1915 (m3Psi1915) in 23S rRNA. This chain is Ribosomal RNA large subunit methyltransferase H, found in Clostridium tetani (strain Massachusetts / E88).